A 172-amino-acid chain; its full sequence is Spore coat protein X (172 aa).

It is found in the spore coat. In Bacillus subtilis (strain 168), this protein is Spore coat protein X (cotX).